We begin with the raw amino-acid sequence, 214 residues long: Large ribosomal subunit protein uL16-like (214 aa).

This sequence belongs to the universal ribosomal protein uL16 family. Component of a male germ cell-specific 60S large ribosomal subunit (LSU), which contains RPL10L and RPL39L, instead of RPL10 and RPL39 paralogs. The composition of the rest of the complex is similar to classical ribosomes. In terms of tissue distribution, testis-specific.

The protein resides in the cytoplasm. In terms of biological role, testis-specific component of the ribosome, which is required for the transition from prophase to metaphase in male meiosis I. Compensates for the inactivated X-linked RPL10 paralog during spermatogenesis. The ribosome is a large ribonucleoprotein complex responsible for the synthesis of proteins in the cell. The male germ cell-specific ribosome displays a ribosomal polypeptide exit tunnel of distinct size and charge states compared with the classical ribosome. It is responsible for regulating the biosynthesis and folding of a subset of male germ-cell-specific proteins that are essential for the formation of sperm. This Mus musculus (Mouse) protein is Large ribosomal subunit protein uL16-like.